A 276-amino-acid chain; its full sequence is Undecaprenyl-diphosphatase 2 (276 aa).

8 consecutive transmembrane segments (helical) span residues 1-21 (MSLW…LFPV), 44-64 (QLLP…LWYF), 87-107 (GHLM…GLLL), 114-134 (VFHD…LLWL), 150-170 (MTFK…IPGF), 190-210 (AAEF…VLEL), 222-242 (DALL…RFLM), and 251-271 (LASF…WFML).

Belongs to the UppP family.

It is found in the cell inner membrane. The catalysed reaction is di-trans,octa-cis-undecaprenyl diphosphate + H2O = di-trans,octa-cis-undecaprenyl phosphate + phosphate + H(+). In terms of biological role, catalyzes the dephosphorylation of undecaprenyl diphosphate (UPP). Confers resistance to bacitracin. In Burkholderia orbicola (strain AU 1054), this protein is Undecaprenyl-diphosphatase 2.